The sequence spans 37 residues: Large ribosomal subunit protein bL36c (37 aa).

It belongs to the bacterial ribosomal protein bL36 family.

It localises to the plastid. The protein resides in the chloroplast. This Oenothera argillicola (Appalachian evening primrose) protein is Large ribosomal subunit protein bL36c.